The primary structure comprises 309 residues: Ribonuclease Z (309 aa).

Zn(2+) contacts are provided by His-64, His-66, Asp-68, His-69, His-141, Asp-209, and His-267. Asp-68 acts as the Proton acceptor in catalysis.

This sequence belongs to the RNase Z family. Homodimer. Requires Zn(2+) as cofactor.

It carries out the reaction Endonucleolytic cleavage of RNA, removing extra 3' nucleotides from tRNA precursor, generating 3' termini of tRNAs. A 3'-hydroxy group is left at the tRNA terminus and a 5'-phosphoryl group is left at the trailer molecule.. In terms of biological role, zinc phosphodiesterase, which displays some tRNA 3'-processing endonuclease activity. Probably involved in tRNA maturation, by removing a 3'-trailer from precursor tRNA. In Picrophilus torridus (strain ATCC 700027 / DSM 9790 / JCM 10055 / NBRC 100828 / KAW 2/3), this protein is Ribonuclease Z.